Consider the following 88-residue polypeptide: HssA/B-like protein 12 (88 aa).

It belongs to the hssA/B family.

The sequence is that of HssA/B-like protein 12 (hssl12) from Dictyostelium discoideum (Social amoeba).